The following is a 350-amino-acid chain: tRNA pseudouridine synthase D (350 aa).

The active-site Nucleophile is aspartate 79. The 153-residue stretch at 154–306 (GAPNYYGPQR…EQERRPIVLY (153 aa)) folds into the TRUD domain.

This sequence belongs to the pseudouridine synthase TruD family.

The enzyme catalyses uridine(13) in tRNA = pseudouridine(13) in tRNA. Functionally, responsible for synthesis of pseudouridine from uracil-13 in transfer RNAs. The polypeptide is tRNA pseudouridine synthase D (Pseudoalteromonas atlantica (strain T6c / ATCC BAA-1087)).